Reading from the N-terminus, the 546-residue chain is Chaperonin GroEL (546 aa).

Residues 30-33 (TLGP), Lys51, 87-91 (DGTTT), Gly415, and Asp496 contribute to the ATP site. The disordered stretch occupies residues 526–546 (PEPKSAPAGGMGGMGGMDGMM). Residues 534–546 (GGMGGMGGMDGMM) show a composition bias toward gly residues.

It belongs to the chaperonin (HSP60) family. Forms a cylinder of 14 subunits composed of two heptameric rings stacked back-to-back. Interacts with the co-chaperonin GroES.

It is found in the cytoplasm. It catalyses the reaction ATP + H2O + a folded polypeptide = ADP + phosphate + an unfolded polypeptide.. Functionally, together with its co-chaperonin GroES, plays an essential role in assisting protein folding. The GroEL-GroES system forms a nano-cage that allows encapsulation of the non-native substrate proteins and provides a physical environment optimized to promote and accelerate protein folding. This chain is Chaperonin GroEL, found in Rhodopseudomonas palustris.